The sequence spans 637 residues: Proton myo-inositol cotransporter (637 aa).

At 1 to 65 (MSRKASEDVE…AARRQFQRDE (65 aa)) the chain is on the cytoplasmic side. A Phosphoserine modification is found at Ser-6. The tract at residues 16-38 (LSSLMGERRRRQPEPGAPGGERS) is disordered. A phosphoserine mark is found at Ser-44 and Ser-47. Residues 66–86 (TPAFVYAAAAFSALGGFLFGY) form a helical membrane-spanning segment. Residues 87–114 (DTGVVSGAMLLLRRQMRLGAMWQELLVS) lie on the Extracellular side of the membrane. Residues 115–135 (GAVGAAAVAALAGGALNGALG) traverse the membrane as a helical segment. Residues 136-137 (RR) lie on the Cytoplasmic side of the membrane. Residues 138 to 158 (SAILLASALCTVGSAVLAAAA) form a helical membrane-spanning segment. The Extracellular segment spans residues 159–167 (NKETLLAGR). A helical transmembrane segment spans residues 168–188 (LVVGLGIGIASMTVPVYIAEV). The Cytoplasmic portion of the chain corresponds to 189–201 (SPPNLRGRLVTIN). The helical transmembrane segment at 202–222 (TLFITGGQFFASVVDGAFSYL) threads the bilayer. Over 223-228 (QKDGWR) the chain is Extracellular. The helical transmembrane segment at 229–249 (YMLGLAAIPAVIQFLGFLFLP) threads the bilayer. The Cytoplasmic portion of the chain corresponds to 250 to 313 (ESPRWLIQKG…RMLSYPPTRR (64 aa)). The chain crosses the membrane as a helical span at residues 314-334 (ALAVGCGLQMFQQLSGINTIM). Topologically, residues 335–352 (YYSATILQMSGVEDDRLA) are extracellular. Residues 353 to 373 (IWLASITAFTNFIFTLVGVWL) traverse the membrane as a helical segment. At 374–382 (VEKVGRRKL) the chain is on the cytoplasmic side. A helical transmembrane segment spans residues 383-403 (TFGSLAGTTVALTILALGFLL). Residues 404-497 (SAQVSPRVTF…SFCPTPYSWT (94 aa)) lie on the Extracellular side of the membrane. Asn-422, Asn-447, and Asn-474 each carry an N-linked (GlcNAc...) asparagine glycan. A helical membrane pass occupies residues 498–518 (ALVGLVLYLVFFAPGMGPMPW). At 519 to 538 (TVNSEIYPLWARSTGNACSA) the chain is on the cytoplasmic side. A helical transmembrane segment spans residues 539–559 (GINWIFNVLVSLTFLHTAEYL). The Extracellular segment spans residues 560 to 562 (TYY). Residues 563-583 (GAFFLYAGFAAVGLLFVYGCL) traverse the membrane as a helical segment. Residues 584-637 (PETKGKKLEEIESLFDHRLCTCGTADSDEGRYIEYIRVKGSNYHLSDNDASDVE) are Cytoplasmic-facing. Ser-629 and Ser-634 each carry phosphoserine.

It belongs to the major facilitator superfamily. Sugar transporter (TC 2.A.1.1) family.

The protein localises to the cell membrane. It carries out the reaction myo-inositol(out) + H(+)(out) = myo-inositol(in) + H(+)(in). Its function is as follows. H(+)-myo-inositol cotransporter. Can also transport related stereoisomers. The protein is Proton myo-inositol cotransporter of Rattus norvegicus (Rat).